Here is a 414-residue protein sequence, read N- to C-terminus: Na(+)-translocating NADH-quinone reductase subunit B (414 aa).

4 helical membrane passes run 23–40 (WFAL…PGLV), 56–76 (IMIM…YNAG), 129–149 (FLPI…LFCM), and 164–184 (ILFA…LGIT). Thr-236 bears the FMN phosphoryl threonine mark. Helical transmembrane passes span 268-288 (IPGS…AMIV), 297-317 (IIAG…VIGS), 322-342 (MFSM…GMFF), 358-378 (WWYG…NPAY), and 381-401 (GMML…HLVV).

Belongs to the NqrB/RnfD family. Composed of six subunits; NqrA, NqrB, NqrC, NqrD, NqrE and NqrF. FMN serves as cofactor.

The protein resides in the cell inner membrane. The enzyme catalyses a ubiquinone + n Na(+)(in) + NADH + H(+) = a ubiquinol + n Na(+)(out) + NAD(+). In terms of biological role, NQR complex catalyzes the reduction of ubiquinone-1 to ubiquinol by two successive reactions, coupled with the transport of Na(+) ions from the cytoplasm to the periplasm. NqrA to NqrE are probably involved in the second step, the conversion of ubisemiquinone to ubiquinol. The polypeptide is Na(+)-translocating NADH-quinone reductase subunit B (Vibrio vulnificus (strain CMCP6)).